A 316-amino-acid polypeptide reads, in one-letter code: Probable cell division protein WhiA (316 aa).

Residues 275–309 constitute a DNA-binding region (H-T-H motif); the sequence is TLKELGEMVASGKISKSGINHRLRKLDEIAEQLRT.

Belongs to the WhiA family.

Involved in cell division and chromosome segregation. The polypeptide is Probable cell division protein WhiA (Bacillus velezensis (strain DSM 23117 / BGSC 10A6 / LMG 26770 / FZB42) (Bacillus amyloliquefaciens subsp. plantarum)).